The chain runs to 106 residues: Large ribosomal subunit protein uL24 (106 aa).

This sequence belongs to the universal ribosomal protein uL24 family. In terms of assembly, part of the 50S ribosomal subunit.

Its function is as follows. One of two assembly initiator proteins, it binds directly to the 5'-end of the 23S rRNA, where it nucleates assembly of the 50S subunit. In terms of biological role, one of the proteins that surrounds the polypeptide exit tunnel on the outside of the subunit. In Blochmanniella floridana, this protein is Large ribosomal subunit protein uL24.